Reading from the N-terminus, the 117-residue chain is MAANNLAKIQFYEGTNEPVVPEIRLTRGNDGTTGQAIFIFEKPQALSSITEGEITGMRMIDSEGEIMTREVKVKFVDGEPMYLEGTYIWKTKSDFDRFMRFANSYAKSNGLGYSEKK.

This sequence belongs to the Psb28 family. In terms of assembly, part of the photosystem II complex.

It is found in the cellular thylakoid membrane. In Prochlorococcus marinus (strain MIT 9515), this protein is Photosystem II reaction center Psb28 protein.